Reading from the N-terminus, the 247-residue chain is Proteasome subunit alpha type-7 (247 aa).

It belongs to the peptidase T1A family. The 26S proteasome consists of a 20S proteasome core and two 19S regulatory subunits. The 20S proteasome core is composed of 28 subunits that are arranged in four stacked rings, resulting in a barrel-shaped structure. The two end rings are each formed by seven alpha subunits, and the two central rings are each formed by seven beta subunits. The catalytic chamber with the active sites is on the inside of the barrel.

It localises to the cytoplasm. It is found in the nucleus. Its function is as follows. The proteasome is a multicatalytic proteinase complex which is characterized by its ability to cleave peptides with Arg, Phe, Tyr, Leu, and Glu adjacent to the leaving group at neutral or slightly basic pH. The proteasome has an ATP-dependent proteolytic activity. The sequence is that of Proteasome subunit alpha type-7 (PSA4) from Trypanosoma brucei brucei.